A 327-amino-acid polypeptide reads, in one-letter code: Pyruvate dehydrogenase E1 component subunit beta (327 aa).

Residue E60 participates in thiamine diphosphate binding.

Heterodimer of an alpha and a beta chain. Thiamine diphosphate serves as cofactor.

It carries out the reaction N(6)-[(R)-lipoyl]-L-lysyl-[protein] + pyruvate + H(+) = N(6)-[(R)-S(8)-acetyldihydrolipoyl]-L-lysyl-[protein] + CO2. Functionally, the pyruvate dehydrogenase complex catalyzes the overall conversion of pyruvate to acetyl-CoA and CO(2). It contains multiple copies of three enzymatic components: pyruvate dehydrogenase (E1), dihydrolipoamide acetyltransferase (E2) and lipoamide dehydrogenase (E3). This chain is Pyruvate dehydrogenase E1 component subunit beta (pdhB), found in Acholeplasma laidlawii.